Consider the following 189-residue polypeptide: Interferon alpha-4 (189 aa).

The signal sequence occupies residues 1-23; that stretch reads MALSFSLLMAVLVLSYKSICSLG. Cystine bridges form between cysteine 24–cysteine 122 and cysteine 52–cysteine 162.

The protein belongs to the alpha/beta interferon family.

The protein localises to the secreted. Functionally, produced by macrophages, IFN-alpha have antiviral activities. Interferon stimulates the production of two enzymes: a protein kinase and an oligoadenylate synthetase. This chain is Interferon alpha-4 (IFNA4), found in Homo sapiens (Human).